We begin with the raw amino-acid sequence, 110 residues long: Period circadian protein (110 aa).

The interval 23-97 (VTNTSIAGTG…GGAGGGGGVT (75 aa)) is disordered. 12 repeat units span residues 30-31 (GT), 33-34 (GT), 36-37 (GT), 38-39 (GT), 40-41 (GT), 42-43 (GT), 44-45 (GT), 46-47 (GT), 48-49 (GT), 50-51 (GT), 52-53 (GT), and 54-55 (GT). A compositionally biased stretch (gly residues) spans 30-63 (GTGGTGGTGTGTGTGTGTGTGTGTGTDTGTGTGT). The interval 30–79 (GTGGTGGTGTGTGTGTGTGTGTGTGTDTGTGTGTRNGTNSGTNSGTRTGT) is 24 X 2 AA approximate tandem repeats of G-T. The stretch at 56–57 (DT) is one 13; approximate repeat. Repeat copies occupy residues 58 to 59 (GT), 60 to 61 (GT), and 62 to 63 (GT). Residues 64 to 65 (RN) form a 17; approximate repeat. The segment covering 64 to 83 (RNGTNSGTNSGTRTGTASSY) has biased composition (low complexity). Copy 18 of the repeat occupies 66–67 (GT). The stretch at 68 to 69 (NS) is one 19; approximate repeat. Copy 20 of the repeat occupies 70–71 (GT). One copy of the 21; approximate repeat lies at 72-73 (NS). Residues 74–75 (GT) form repeat 22. The 23; approximate repeat unit spans residues 76-77 (RT). Copy 24 of the repeat occupies 78-79 (GT). Over residues 84-96 (RGGGGGAGGGGGV) the composition is skewed to gly residues.

Forms a heterodimer with timeless (TIM); the complex then translocates into the nucleus. Post-translationally, phosphorylated with a circadian rhythmicity, probably by the double-time protein (dbt). Phosphorylation could be implicated in the stability of per monomer and in the formation of heterodimer per-tim.

It localises to the nucleus. It is found in the cytoplasm. Its subcellular location is the perinuclear region. In terms of biological role, essential for biological clock functions. Determines the period length of circadian and ultradian rhythms; an increase in PER dosage leads to shortened circadian rhythms and a decrease leads to lengthened circadian rhythms. Essential for the circadian rhythmicity of locomotor activity, eclosion behavior, and for the rhythmic component of the male courtship song that originates in the thoracic nervous system. The biological cycle depends on the rhythmic formation and nuclear localization of the TIM-PER complex. Light induces the degradation of TIM, which promotes elimination of PER. Nuclear activity of the heterodimer coordinatively regulates PER and TIM transcription through a negative feedback loop. Behaves as a negative element in circadian transcriptional loop. Does not appear to bind DNA, suggesting indirect transcriptional inhibition. The polypeptide is Period circadian protein (per) (Drosophila erecta (Fruit fly)).